The sequence spans 330 residues: DNA-directed RNA polymerase subunit alpha (330 aa).

The interval 1–236 (MQGSVTEFLK…EQLDAFVDLR (236 aa)) is alpha N-terminal domain (alpha-NTD). Positions 250–330 (FDPILLRPVD…NWPPASIAED (81 aa)) are alpha C-terminal domain (alpha-CTD).

This sequence belongs to the RNA polymerase alpha chain family. Homodimer. The RNAP catalytic core consists of 2 alpha, 1 beta, 1 beta' and 1 omega subunit. When a sigma factor is associated with the core the holoenzyme is formed, which can initiate transcription.

It carries out the reaction RNA(n) + a ribonucleoside 5'-triphosphate = RNA(n+1) + diphosphate. DNA-dependent RNA polymerase catalyzes the transcription of DNA into RNA using the four ribonucleoside triphosphates as substrates. The polypeptide is DNA-directed RNA polymerase subunit alpha (Vibrio atlanticus (strain LGP32) (Vibrio splendidus (strain Mel32))).